The chain runs to 218 residues: Adenylate kinase (218 aa).

10-15 (GAGKGT) lines the ATP pocket. The segment at 30–59 (STGDMLRAAVKAGTPLGQQAKAVMDAGQLV) is NMP. Residues threonine 31, arginine 36, 57–59 (QLV), 85–88 (GFPR), and glutamine 92 each bind AMP. Residues 122–159 (GRRSHPASGRTYHVKFNPPKVEGQDDVTGEPLVQREDD) are LID. Residues arginine 123 and 132 to 133 (TY) contribute to the ATP site. Positions 127 to 151 (PASGRTYHVKFNPPKVEGQDDVTGE) are disordered. The AMP site is built by arginine 156 and arginine 167. Glycine 203 lines the ATP pocket.

It belongs to the adenylate kinase family. Monomer.

Its subcellular location is the cytoplasm. It catalyses the reaction AMP + ATP = 2 ADP. The protein operates within purine metabolism; AMP biosynthesis via salvage pathway; AMP from ADP: step 1/1. Its function is as follows. Catalyzes the reversible transfer of the terminal phosphate group between ATP and AMP. Plays an important role in cellular energy homeostasis and in adenine nucleotide metabolism. In Delftia acidovorans (strain DSM 14801 / SPH-1), this protein is Adenylate kinase.